Consider the following 119-residue polypeptide: Large ribosomal subunit protein P3z (119 aa).

Residues 79 to 90 (AGGAASSGGGAG) show a composition bias toward gly residues. The tract at residues 79–119 (AGGAASSGGGAGEAAAAPKEDEKKKEESEEEEGDFGFDLFG) is disordered. A compositionally biased stretch (basic and acidic residues) spans 96–105 (PKEDEKKKEE).

Belongs to the eukaryotic ribosomal protein P1/P2 family. Post-translationally, phosphorylated.

In terms of biological role, plays an important role in the elongation step of protein synthesis. The protein is Large ribosomal subunit protein P3z (RPP3A) of Arabidopsis thaliana (Mouse-ear cress).